Reading from the N-terminus, the 599-residue chain is Elongation factor 4 (599 aa).

A tr-type G domain is found at 5-187 (SHIRNFSIIA…RLVHTIPAPE (183 aa)). GTP is bound by residues 17–22 (DHGKST) and 134–137 (NKMD).

The protein belongs to the TRAFAC class translation factor GTPase superfamily. Classic translation factor GTPase family. LepA subfamily.

It is found in the cell inner membrane. It catalyses the reaction GTP + H2O = GDP + phosphate + H(+). Its function is as follows. Required for accurate and efficient protein synthesis under certain stress conditions. May act as a fidelity factor of the translation reaction, by catalyzing a one-codon backward translocation of tRNAs on improperly translocated ribosomes. Back-translocation proceeds from a post-translocation (POST) complex to a pre-translocation (PRE) complex, thus giving elongation factor G a second chance to translocate the tRNAs correctly. Binds to ribosomes in a GTP-dependent manner. The polypeptide is Elongation factor 4 (Pseudomonas putida (strain ATCC 47054 / DSM 6125 / CFBP 8728 / NCIMB 11950 / KT2440)).